The following is a 632-amino-acid chain: tRNA uridine 5-carboxymethylaminomethyl modification enzyme MnmG (632 aa).

FAD is bound by residues 13–18 (GGGHAG), Val125, and Ser180. An NAD(+)-binding site is contributed by 273–287 (GPRYCPSIEDKVMRF). Gln370 is an FAD binding site.

This sequence belongs to the MnmG family. In terms of assembly, homodimer. Heterotetramer of two MnmE and two MnmG subunits. Requires FAD as cofactor.

It is found in the cytoplasm. NAD-binding protein involved in the addition of a carboxymethylaminomethyl (cmnm) group at the wobble position (U34) of certain tRNAs, forming tRNA-cmnm(5)s(2)U34. The chain is tRNA uridine 5-carboxymethylaminomethyl modification enzyme MnmG from Proteus mirabilis (strain HI4320).